Reading from the N-terminus, the 147-residue chain is 6,7-dimethyl-8-ribityllumazine synthase (147 aa).

5-amino-6-(D-ribitylamino)uracil is bound by residues Phe-16, Thr-48–Asp-50, and Ala-73–Ile-75. Asp-78–Thr-79 is a (2S)-2-hydroxy-3-oxobutyl phosphate binding site. His-81 functions as the Proton donor in the catalytic mechanism. Leu-106 provides a ligand contact to 5-amino-6-(D-ribitylamino)uracil. Residue Arg-121 coordinates (2S)-2-hydroxy-3-oxobutyl phosphate.

It belongs to the DMRL synthase family.

The enzyme catalyses (2S)-2-hydroxy-3-oxobutyl phosphate + 5-amino-6-(D-ribitylamino)uracil = 6,7-dimethyl-8-(1-D-ribityl)lumazine + phosphate + 2 H2O + H(+). The protein operates within cofactor biosynthesis; riboflavin biosynthesis; riboflavin from 2-hydroxy-3-oxobutyl phosphate and 5-amino-6-(D-ribitylamino)uracil: step 1/2. Functionally, catalyzes the formation of 6,7-dimethyl-8-ribityllumazine by condensation of 5-amino-6-(D-ribitylamino)uracil with 3,4-dihydroxy-2-butanone 4-phosphate. This is the penultimate step in the biosynthesis of riboflavin. This chain is 6,7-dimethyl-8-ribityllumazine synthase, found in Aeropyrum pernix (strain ATCC 700893 / DSM 11879 / JCM 9820 / NBRC 100138 / K1).